The sequence spans 218 residues: Thiopurine S-methyltransferase (218 aa).

Residues tryptophan 10, leucine 45, glutamate 66, and arginine 123 each contribute to the S-adenosyl-L-methionine site.

This sequence belongs to the class I-like SAM-binding methyltransferase superfamily. TPMT family.

The protein localises to the cytoplasm. It carries out the reaction S-adenosyl-L-methionine + a thiopurine = S-adenosyl-L-homocysteine + a thiopurine S-methylether.. This chain is Thiopurine S-methyltransferase, found in Shewanella oneidensis (strain ATCC 700550 / JCM 31522 / CIP 106686 / LMG 19005 / NCIMB 14063 / MR-1).